Here is a 55-residue protein sequence, read N- to C-terminus: Large ribosomal subunit protein bL33 (55 aa).

Post-translationally, the protein is methylated on either Ala-2 or Lys-3.

The sequence is that of Large ribosomal subunit protein bL33 from Rhodopseudomonas palustris (strain ATCC BAA-98 / CGA009).